The following is a 664-amino-acid chain: Protein LYK5 (664 aa).

The N-terminal stretch at 1-26 (MAACTLHALSVTLFLLLFFAVSPAKA) is a signal peptide. Over 27 to 277 (QQPYVNNHQL…DPPGSSSSHK (251 aa)) the chain is Extracellular. N-linked (GlcNAc...) asparagine glycosylation is found at N45, N81, N111, N125, and N129. Disulfide bonds link C52/C114, C58/C181, and C112/C179. Chitin is bound at residue 135–141 (GDETYFS). N144 carries an N-linked (GlcNAc...) asparagine glycan. A chitin-binding site is contributed by 164–170 (ERQLTPG). The 44-residue stretch at 195 to 238 (LTYLVAMGDSISGIAEMFNSTSAAITEGNELTSDNIFFFTPVLV) folds into the LysM domain. N-linked (GlcNAc...) asparagine glycosylation is present at N213. A compositionally biased stretch (pro residues) spans 251–269 (PSPPPPPVVATPPQTPVDP). The disordered stretch occupies residues 251 to 270 (PSPPPPPVVATPPQTPVDPP). Residues 278–298 (WIYIGIGIGAGLLLLLSILAL) traverse the membrane as a helical segment. The Cytoplasmic segment spans residues 299–664 (CFYKRRSKKK…DLLRSGSLGN (366 aa)). Residues 351–643 (KSAIESLTLY…TQVLTTLSMI (293 aa)) enclose the Protein kinase domain. ATP contacts are provided by residues 357 to 365 (LTLYRFNDL) and K395.

It belongs to the protein kinase superfamily. Ser/Thr protein kinase family.

The protein localises to the cell membrane. May recognize microbe-derived N-acetylglucosamine (NAG)-containing ligands. The sequence is that of Protein LYK5 (LYK5) from Arabidopsis thaliana (Mouse-ear cress).